Reading from the N-terminus, the 289-residue chain is Inorganic pyrophosphatase (289 aa).

S2 carries the post-translational modification N-acetylserine. K57 carries the post-translational modification N6-acetyllysine. Positions 116, 121, and 153 each coordinate Mg(2+). An N6-acetyllysine modification is found at K228. Phosphoserine is present on S250.

Belongs to the PPase family. As to quaternary structure, homodimer. The cofactor is Mg(2+).

The protein resides in the cytoplasm. The catalysed reaction is diphosphate + H2O = 2 phosphate + H(+). The chain is Inorganic pyrophosphatase (PPA1) from Macaca fascicularis (Crab-eating macaque).